Consider the following 402-residue polypeptide: UDP-glucose 6-dehydrogenase (402 aa).

NAD(+) contacts are provided by residues 2–19 (KIAV…GVLL), V11, D29, K34, T83, T118, and E145. Substrate contacts are provided by residues 141–145 (EFLRE), K204, N208, 249–253 (YNNPS), and G257. An NAD(+)-binding site is contributed by Y259. C260 (nucleophile) is an active-site residue. An NAD(+)-binding site is contributed by K263. K320 serves as a coordination point for substrate. R327 contributes to the NAD(+) binding site.

This sequence belongs to the UDP-glucose/GDP-mannose dehydrogenase family.

It catalyses the reaction UDP-alpha-D-glucose + 2 NAD(+) + H2O = UDP-alpha-D-glucuronate + 2 NADH + 3 H(+). It participates in nucleotide-sugar biosynthesis; UDP-alpha-D-glucuronate biosynthesis; UDP-alpha-D-glucuronate from UDP-alpha-D-glucose: step 1/1. In terms of biological role, catalyzes the formation of UDP-glucuronic acid which is required for capsular hyaluronic acid synthesis. This chain is UDP-glucose 6-dehydrogenase (hasB), found in Streptococcus pyogenes serotype M3 (strain ATCC BAA-595 / MGAS315).